A 1295-amino-acid polypeptide reads, in one-letter code: Unconventional myosin-VI (1295 aa).

The Myosin N-terminal SH3-like domain maps to 2 to 53 (EDGRPVWAPHPTEGFQMGNIVDIGPDSLTIEPLGQKGKTFLALINQVFPAEE). The Myosin motor domain maps to 57-771 (KDVEDNCSLM…KFAEFDQIMK (715 aa)). 151 to 158 (GESGAGKT) serves as a coordination point for ATP. A Phosphoserine modification is found at serine 267. Residues 273-317 (YLNRGCTRYFANKETDKQILQNRKTPEHLKAGSLKDPLLDDHGDF) are responsible for slow ATPase activity. A Phosphothreonine modification is found at threonine 405. Residue serine 604 is modified to Phosphoserine. The tract at residues 651-673 (LNLLLDKLRSTGASFIRCIKPNL) is actin-binding. Residues 782-810 (KRVNHWLICSRWKKVQWCSLSVIKLKNKI) are required for binding calmodulin. The IQ domain maps to 813-842 (RAEACIKMQKTIRMWLCKRRHKPRIDGLVK). The three-helix bundle stretch occupies residues 835-916 (PRIDGLVKVG…EVLLSALQKK (82 aa)). The SAH stretch occupies residues 917 to 984 (KQQEEEAERL…EDDEKRIQAE (68 aa)). Residues 934–955 (EKERKRREEDEQRRRKEEEERR) are disordered. Residues 1061-1286 (KEMSEILSRG…ESRQARPTYA (226 aa)) are interaction with TAX1BP1 and CALCOCO2/NDP52. Residues 1117 to 1119 (RRL) are interaction with OPTN. Serine 1156 is modified (phosphoserine). Residues 1158–1286 (QQNPAAQLPA…ESRQARPTYA (129 aa)) form an interaction with TOM1 region.

It belongs to the TRAFAC class myosin-kinesin ATPase superfamily. Myosin family. In terms of assembly, homodimer; dimerization seems to implicate the unfolding of the three-helix bundle region creating an additional calmodulin binding site, and cargo binding. Able to function as a monomer under specific conditions in vitro. Forms a complex with CFTR and DAB2 in the apical membrane of epithelial cells. Component of the DISP/DOCK7-induced septin displacement complex, at least composed of DOCK7, LRCH3 and MYO6. Binding to calmodulin through a unique insert, not found in other myosins, located in the neck region between the motor domain and the IQ domain appears to contribute to the directionality reversal. This interaction occurs only if the C-terminal lobe of calmodulin is occupied by calcium. Interaction with F-actin/ACTN1 occurs only at the apical brush border domain of the proximal tubule cells. Interacts with DAB2. In vitro, the C-terminal globular tail binds a C-terminal region of DAB2. Interacts with CFTR. Interacts with CABP5. Interacts (via residues 1158-1286) with TOM1 (via residues 392-463). Interacts (via residues 1060-1285) with OPTN. Interacts (via residues 1060-1285) with TAX1BP1 and CALCOCO2/NDP52. Interacts with TOM1L2. Interacts with CLIC5; may work together in a complex which also includes RDX and MYO6 to stabilize linkages between the plasma membrane and subjacent actin cytoskeleton at the base of stereocilia. Phosphorylation in the motor domain, induced by EGF, results in translocation of MYO6 from the cell surface to membrane ruffles and affects F-actin dynamics. Phosphorylated in vitro by p21-activated kinase (PAK). As to expression, expressed in the retina (at protein level).

It localises to the golgi apparatus. The protein resides in the trans-Golgi network membrane. Its subcellular location is the nucleus. It is found in the cytoplasm. The protein localises to the perinuclear region. It localises to the membrane. The protein resides in the clathrin-coated pit. Its subcellular location is the cytoplasmic vesicle. It is found in the clathrin-coated vesicle. The protein localises to the cell projection. It localises to the filopodium. The protein resides in the ruffle membrane. Its subcellular location is the microvillus. It is found in the cytosol. In terms of biological role, myosins are actin-based motor molecules with ATPase activity. Unconventional myosins serve in intracellular movements. Myosin 6 is a reverse-direction motor protein that moves towards the minus-end of actin filaments. Has slow rate of actin-activated ADP release due to weak ATP binding. Functions in a variety of intracellular processes such as vesicular membrane trafficking and cell migration. Required for the structural integrity of the Golgi apparatus via the p53-dependent pro-survival pathway. Appears to be involved in a very early step of clathrin-mediated endocytosis in polarized epithelial cells. Together with TOM1, mediates delivery of endocytic cargo to autophagosomes thereby promoting autophagosome maturation and driving fusion with lysosomes. Links TOM1 with autophagy receptors, such as TAX1BP1; CALCOCO2/NDP52 and OPTN. May act as a regulator of F-actin dynamics. As part of the DISP complex, may regulate the association of septins with actin and thereby regulate the actin cytoskeleton. May play a role in transporting DAB2 from the plasma membrane to specific cellular targets. May play a role in the extension and network organization of neurites. Required for structural integrity of inner ear hair cells. Required for the correct localization of CLIC5 and RDX at the stereocilium base. Modulates RNA polymerase II-dependent transcription. In Bos taurus (Bovine), this protein is Unconventional myosin-VI.